A 1047-amino-acid polypeptide reads, in one-letter code: MEKPGMSLLKGSLCVIVFLLLLSLVESVKGGGYVKYGTEAKVVPGKLNVHLVPHSHDDVGWLKTVDQYYVGSNNRIQNACVRNVLDSVVDSLLRDPNRKFVFAEMAFFTRWWEEQSPERQEQVRRLVKSGQLEFVNGGWAMNDEATCHYIDMIDQTTKGHRFIKQQFNTTPRAAWQIDPFGHSSVQAYLLGAELGLDSVHFARIDYQDREKRKAEKSLEVIWRGSKTLDSSSQIFTNIFFVHYGPPTGFHYEVTDDYVPLQDNPRFDGYNIKEAVNDFVNASLVYANVSRGNHVMWTMGDDFQYQFAESWFRQMDRLIHYVNKDGRVNALYSTPSLYVDAKNVANVTWPLKTHDFFPYADRAYAYWTGYFTSRPALKRYVRALSGYYMAARQLEFLVGKNSGGPNTYSLGDALGIAQHHDAVTGTAKQHVTNDYMKRLALGASEAEAVVNSALACLMNKAPKGGCTKPAIAFSQQCSLMNISYCPSTEETLPGQKSLILVAYNSLGWNRTEIIRIPVNDAGLSVEDSSGNTLDAQYIPMDNVTSNLRSFYTKAYLGISSLQRPKYWLVFKAKVPPLGWNTFFISKASAQGSNNHKHSSVMLSPMNNTTEIGPGNLKMVFSSDSGRLERMYNSRTGADIKVDQNYFWYASNVGDAKDPQVSGAYIFRPNGSLAYPVSSSKICTVTSAFIGNGNVQSKLQIVRGPLIDEVHQQFSPWVAQVVRLYKEKEHAEFEFTIGPISVGKGHLTGKEIITRMVTDMTTAKEFYTDSNGRDFLKRVRDNRTDWHLEVNEPIAGNYYPLNLGMYIKDEKAELSVLVDRATGGASIKDGEIELMLHRRTSMDDSRGVEESLVETVCVNDTCAGLTIRGNYYVSINKVGEGGRWRRETGQEIYSPLLMAFAHENKEKWKASNTVKGYAMDHLYTLPQNIALITLEELDLGNVLLRLAHLYEAGEDSDYSKIAKVELKKLFSGKMIKEVTEMSLSANQEKVKMKEKMKWKVEGEAEQPSSPLRGGPVDKSTLVVELGPMEIRTFVVQFYQKQRRRKLFVG.

The signal sequence occupies residues 1–27 (MEKPGMSLLKGSLCVIVFLLLLSLVES). Residues histidine 56, aspartate 58, and aspartate 178 each contribute to the Zn(2+) site. N-linked (GlcNAc...) asparagine glycosylation is found at asparagine 280, asparagine 287, and asparagine 345. Histidine 419 contributes to the Zn(2+) binding site. Intrachain disulfides connect cysteine 455/cysteine 465 and cysteine 476/cysteine 484. 8 N-linked (GlcNAc...) asparagine glycosylation sites follow: asparagine 480, asparagine 508, asparagine 541, asparagine 605, asparagine 606, asparagine 668, asparagine 780, and asparagine 857. Cysteine 855 and cysteine 860 form a disulfide bridge.

Belongs to the glycosyl hydrolase 38 family. Homodimer. Zn(2+) serves as cofactor.

It is found in the vacuole. The enzyme catalyses Hydrolysis of terminal, non-reducing alpha-D-mannose residues in alpha-D-mannosides.. Functionally, liberates mannose from p-nitrophenyl-alpha-D-mannoside in vitro. In Arabidopsis thaliana (Mouse-ear cress), this protein is Probable alpha-mannosidase At5g66150.